The following is a 202-amino-acid chain: Ribosome maturation factor RimM (202 aa).

The region spanning 100–195 (ADEWYPKDLI…YLTLDPPGGL (96 aa)) is the PRC barrel domain.

Belongs to the RimM family. In terms of assembly, binds ribosomal protein uS19.

The protein localises to the cytoplasm. In terms of biological role, an accessory protein needed during the final step in the assembly of 30S ribosomal subunit, possibly for assembly of the head region. Essential for efficient processing of 16S rRNA. May be needed both before and after RbfA during the maturation of 16S rRNA. It has affinity for free ribosomal 30S subunits but not for 70S ribosomes. The chain is Ribosome maturation factor RimM from Bifidobacterium longum (strain NCC 2705).